We begin with the raw amino-acid sequence, 517 residues long: Crotonobetaine/carnitine--CoA ligase (517 aa).

Belongs to the ATP-dependent AMP-binding enzyme family.

It catalyses the reaction 4-(trimethylamino)butanoate + ATP + CoA = 4-(trimethylamino)butanoyl-CoA + AMP + diphosphate. It carries out the reaction crotonobetaine + ATP + CoA = crotonobetainyl-CoA + AMP + diphosphate. The catalysed reaction is (R)-carnitine + ATP + CoA = (R)-carnitinyl-CoA + AMP + diphosphate. The protein operates within amine and polyamine metabolism; carnitine metabolism. Functionally, catalyzes the transfer of CoA to carnitine, generating the initial carnitinyl-CoA needed for the CaiB reaction cycle. Also has activity toward crotonobetaine and gamma-butyrobetaine. The protein is Crotonobetaine/carnitine--CoA ligase of Escherichia fergusonii (strain ATCC 35469 / DSM 13698 / CCUG 18766 / IAM 14443 / JCM 21226 / LMG 7866 / NBRC 102419 / NCTC 12128 / CDC 0568-73).